The sequence spans 947 residues: Bifunctional glutamine synthetase adenylyltransferase/adenylyl-removing enzyme (947 aa).

The segment at Met-1–Glu-440 is adenylyl removase. Residues Ser-450–Val-947 are adenylyl transferase.

Belongs to the GlnE family. Mg(2+) is required as a cofactor.

It catalyses the reaction [glutamine synthetase]-O(4)-(5'-adenylyl)-L-tyrosine + phosphate = [glutamine synthetase]-L-tyrosine + ADP. The catalysed reaction is [glutamine synthetase]-L-tyrosine + ATP = [glutamine synthetase]-O(4)-(5'-adenylyl)-L-tyrosine + diphosphate. In terms of biological role, involved in the regulation of glutamine synthetase GlnA, a key enzyme in the process to assimilate ammonia. When cellular nitrogen levels are high, the C-terminal adenylyl transferase (AT) inactivates GlnA by covalent transfer of an adenylyl group from ATP to specific tyrosine residue of GlnA, thus reducing its activity. Conversely, when nitrogen levels are low, the N-terminal adenylyl removase (AR) activates GlnA by removing the adenylyl group by phosphorolysis, increasing its activity. The regulatory region of GlnE binds the signal transduction protein PII (GlnB) which indicates the nitrogen status of the cell. This Salmonella agona (strain SL483) protein is Bifunctional glutamine synthetase adenylyltransferase/adenylyl-removing enzyme.